A 150-amino-acid polypeptide reads, in one-letter code: UPF0178 protein PC1_0756 (150 aa).

Belongs to the UPF0178 family.

The protein is UPF0178 protein PC1_0756 of Pectobacterium carotovorum subsp. carotovorum (strain PC1).